We begin with the raw amino-acid sequence, 268 residues long: Tubulin-specific chaperone C (268 aa).

A C-CAP/cofactor C-like domain is found at 98-255; the sequence is PAYTTTLKKH…SAFAFEDFDI (158 aa).

Its subcellular location is the cytoplasm. The protein resides in the cytoskeleton. Functionally, tubulin-folding protein; involved in the early step of the tubulin folding pathway. In Saccharomyces cerevisiae (strain ATCC 204508 / S288c) (Baker's yeast), this protein is Tubulin-specific chaperone C (CIN2).